Here is a 75-residue protein sequence, read N- to C-terminus: Protein EGO2 (75 aa).

The protein is Protein EGO2 of Saccharomyces cerevisiae (strain ATCC 204508 / S288c) (Baker's yeast).